The following is a 602-amino-acid chain: Glutathione-regulated potassium-efflux system protein KefB (602 aa).

13 helical membrane-spanning segments follow: residues 4-24 (TGLL…VPIA), 29-49 (IGAV…GLGF), 55-75 (EILH…GLEL), 87-107 (IFGV…ALLY), 115-135 (AAVI…LQLM), 152-172 (VLLF…ILAG), 181-201 (VKIG…RYLL), 207-227 (YIVA…VVLG), 230-250 (LFMD…GILL), 261-281 (IAIE…VGMA), 296-318 (LGVL…VFGL), 326-346 (FAGV…AAFS), and 356-376 (ALLL…MQVI). One can recognise an RCK N-terminal domain in the interval 400–519 (DPQVIIVGFG…NGVKDFTRET (120 aa)).

It belongs to the monovalent cation:proton antiporter 2 (CPA2) transporter (TC 2.A.37) family. KefB subfamily. In terms of assembly, interacts with the regulatory subunit KefG.

The protein localises to the cell inner membrane. Functionally, pore-forming subunit of a potassium efflux system that confers protection against electrophiles. Catalyzes K(+)/H(+) antiport. This Yersinia pestis bv. Antiqua (strain Antiqua) protein is Glutathione-regulated potassium-efflux system protein KefB.